We begin with the raw amino-acid sequence, 511 residues long: ATP synthase subunit alpha (511 aa).

170–177 (GDRQTGKT) contributes to the ATP binding site.

The protein belongs to the ATPase alpha/beta chains family. In terms of assembly, F-type ATPases have 2 components, CF(1) - the catalytic core - and CF(0) - the membrane proton channel. CF(1) has five subunits: alpha(3), beta(3), gamma(1), delta(1), epsilon(1). CF(0) has three main subunits: a(1), b(2) and c(9-12). The alpha and beta chains form an alternating ring which encloses part of the gamma chain. CF(1) is attached to CF(0) by a central stalk formed by the gamma and epsilon chains, while a peripheral stalk is formed by the delta and b chains.

It is found in the cell inner membrane. It catalyses the reaction ATP + H2O + 4 H(+)(in) = ADP + phosphate + 5 H(+)(out). Produces ATP from ADP in the presence of a proton gradient across the membrane. The alpha chain is a regulatory subunit. This is ATP synthase subunit alpha from Pelagibacter ubique (strain HTCC1062).